The chain runs to 328 residues: Tellurite resistance protein TehA homolog (328 aa).

Residues 1–21 (MLHFAHIFQNKVHTMNITKPF) are Cytoplasmic-facing. Residues 22 to 42 (PLPTGYFGIPLGLAALSLAWF) traverse the membrane as a helical segment. The Periplasmic segment spans residues 43–49 (HLENLFP). A helical membrane pass occupies residues 50–73 (AARMVSDVLGIVASAVWILFILMY). Topologically, residues 74 to 93 (AYKLRYYFEEVRAEYHSPVR) are cytoplasmic. A helical membrane pass occupies residues 94–112 (FSFIALIPITTMLVGDILY). Residues 113 to 115 (RWN) lie on the Periplasmic side of the membrane. The chain crosses the membrane as a helical span at residues 116 to 141 (PLIAEVLIWIGTIGQLLFSTLRVSEL). Topologically, residues 142–153 (WQGGVFEQKSTH) are cytoplasmic. Residues 154-174 (PSFYLPAVAANFTSASSLALL) form a helical membrane-spanning segment. Topologically, residues 175-176 (GY) are periplasmic. The helical transmembrane segment at 177–204 (HDLGYLFFGAGMIAWIIFEPVLLQHLRI) threads the bilayer. Residues 205 to 208 (SSLE) are Cytoplasmic-facing. Residues 209-232 (PQFRATMGIVLAPAFVCVSAYLSI) traverse the membrane as a helical segment. Residues 233 to 238 (NHGEVD) lie on the Periplasmic side of the membrane. A helical membrane pass occupies residues 239-262 (TLAKILWGYGFLQLFFLLRLFPWI). Topologically, residues 263–268 (VEKGLN) are cytoplasmic. A helical membrane pass occupies residues 269–289 (IGLWAFSFGLASMANSATAFY). Residues 290-294 (HGNVL) are Periplasmic-facing. A helical transmembrane segment spans residues 295–321 (QGVSIFAFVFSNVMIGLLVLMTIYKLT). Topologically, residues 322 to 328 (KGQFFLK) are cytoplasmic.

This sequence belongs to the tellurite-resistance/dicarboxylate transporter (TDT) family. Homotrimer. Each subunit forms a channel.

Its subcellular location is the cell inner membrane. Functionally, ion channel involved in potassium tellurite resistance. This chain is Tellurite resistance protein TehA homolog (tehA), found in Haemophilus influenzae (strain ATCC 51907 / DSM 11121 / KW20 / Rd).